The sequence spans 330 residues: GMP reductase (330 aa).

Cysteine 180 (thioimidate intermediate) is an active-site residue. Residue 209–232 (LIADGGIRHNGDIAKSVRFGASMV) participates in NADP(+) binding.

It belongs to the IMPDH/GMPR family. GuaC type 2 subfamily.

It catalyses the reaction IMP + NH4(+) + NADP(+) = GMP + NADPH + 2 H(+). Catalyzes the irreversible NADPH-dependent deamination of GMP to IMP. It functions in the conversion of nucleobase, nucleoside and nucleotide derivatives of G to A nucleotides, and in maintaining the intracellular balance of A and G nucleotides. This chain is GMP reductase, found in Lactobacillus delbrueckii subsp. bulgaricus (strain ATCC BAA-365 / Lb-18).